The sequence spans 275 residues: Large ribosomal subunit protein uL2 (275 aa).

A compositionally biased stretch (polar residues) spans 35–49 (DSQSSTAGRNNNGRI). Disordered regions lie at residues 35–59 (DSQS…GGHK) and 224–275 (AMNP…RHKR). Residues 50 to 59 (TTRHKGGGHK) are compositionally biased toward basic residues.

This sequence belongs to the universal ribosomal protein uL2 family. In terms of assembly, part of the 50S ribosomal subunit. Forms a bridge to the 30S subunit in the 70S ribosome.

In terms of biological role, one of the primary rRNA binding proteins. Required for association of the 30S and 50S subunits to form the 70S ribosome, for tRNA binding and peptide bond formation. It has been suggested to have peptidyltransferase activity; this is somewhat controversial. Makes several contacts with the 16S rRNA in the 70S ribosome. This Burkholderia cenocepacia (strain HI2424) protein is Large ribosomal subunit protein uL2.